A 678-amino-acid polypeptide reads, in one-letter code: Glycine--tRNA ligase beta subunit (678 aa).

The protein belongs to the class-II aminoacyl-tRNA synthetase family. Tetramer of two alpha and two beta subunits.

The protein localises to the cytoplasm. It carries out the reaction tRNA(Gly) + glycine + ATP = glycyl-tRNA(Gly) + AMP + diphosphate. In Streptococcus pneumoniae (strain ATCC BAA-255 / R6), this protein is Glycine--tRNA ligase beta subunit.